The following is a 450-amino-acid chain: Keratin, type I cytoskeletal 25 (450 aa).

The tract at residues M1–S24 is disordered. A head region spans residues M1 to N78. The interval E79–W114 is coil 1A. The IF rod domain occupies E79–C394. Positions Y115–I136 are linker 1. Residues I137 to L228 form a coil 1B region. Residues Q229–L251 are linker 12. The tract at residues L252 to D390 is coil 2. The interval D391–N450 is tail. Residue S442 is modified to Phosphoserine.

This sequence belongs to the intermediate filament family. Heterodimer of a type I and a type II keratin. Heterodimer with type II keratin KRT5 leading to the formation of keratin intermediate filament (KIF) network. Interacts with KRT6A to form filaments.

The protein localises to the cytoplasm. Functionally, essential for the proper assembly of type I and type II keratin protein complexes and formation of keratin intermediate filaments in the inner root sheath (irs). Plays a role in the cytoskeleton organization. This is Keratin, type I cytoskeletal 25 from Capra hircus (Goat).